The primary structure comprises 344 residues: Phosphate acyltransferase (344 aa).

The protein belongs to the PlsX family. As to quaternary structure, homodimer. Probably interacts with PlsY.

The protein resides in the cytoplasm. It catalyses the reaction a fatty acyl-[ACP] + phosphate = an acyl phosphate + holo-[ACP]. It functions in the pathway lipid metabolism; phospholipid metabolism. Functionally, catalyzes the reversible formation of acyl-phosphate (acyl-PO(4)) from acyl-[acyl-carrier-protein] (acyl-ACP). This enzyme utilizes acyl-ACP as fatty acyl donor, but not acyl-CoA. In Actinobacillus pleuropneumoniae serotype 5b (strain L20), this protein is Phosphate acyltransferase.